The chain runs to 564 residues: Potassium-transporting ATPase potassium-binding subunit (564 aa).

10 helical membrane-spanning segments follow: residues Leu7–Phe27, Ala67–Leu87, Val135–Leu155, Leu179–Pro199, Phe258–Val278, Ala286–Glu306, Val382–Ile402, Leu420–Ala440, Leu487–Leu507, and Gly528–Leu548.

This sequence belongs to the KdpA family. In terms of assembly, the system is composed of three essential subunits: KdpA, KdpB and KdpC.

It localises to the cell inner membrane. Functionally, part of the high-affinity ATP-driven potassium transport (or Kdp) system, which catalyzes the hydrolysis of ATP coupled with the electrogenic transport of potassium into the cytoplasm. This subunit binds the periplasmic potassium ions and delivers the ions to the membrane domain of KdpB through an intramembrane tunnel. The polypeptide is Potassium-transporting ATPase potassium-binding subunit (Pseudomonas syringae pv. tomato (strain ATCC BAA-871 / DC3000)).